Here is a 368-residue protein sequence, read N- to C-terminus: Histidinol-phosphate aminotransferase 1 (368 aa).

Lysine 224 is modified (N6-(pyridoxal phosphate)lysine).

This sequence belongs to the class-II pyridoxal-phosphate-dependent aminotransferase family. Histidinol-phosphate aminotransferase subfamily. Homodimer. The cofactor is pyridoxal 5'-phosphate.

It carries out the reaction L-histidinol phosphate + 2-oxoglutarate = 3-(imidazol-4-yl)-2-oxopropyl phosphate + L-glutamate. It participates in amino-acid biosynthesis; L-histidine biosynthesis; L-histidine from 5-phospho-alpha-D-ribose 1-diphosphate: step 7/9. The protein is Histidinol-phosphate aminotransferase 1 (hisC1) of Rhizobium meliloti (strain 1021) (Ensifer meliloti).